The sequence spans 349 residues: Isopentenyl-diphosphate delta-isomerase (349 aa).

9 to 10 (RK) contacts substrate. FMN-binding positions include 65-67 (AMT), S95, and N124. 95–97 (STH) is a binding site for substrate. Q154 is a binding site for substrate. A Mg(2+)-binding site is contributed by E155. FMN contacts are provided by residues K186, S211, T216, 262 to 264 (GLR), and 283 to 284 (SR).

This sequence belongs to the IPP isomerase type 2 family. Homooctamer. Dimer of tetramers. Requires FMN as cofactor. It depends on NADPH as a cofactor. The cofactor is Mg(2+).

The protein resides in the cytoplasm. The enzyme catalyses isopentenyl diphosphate = dimethylallyl diphosphate. Functionally, involved in the biosynthesis of isoprenoids. Catalyzes the 1,3-allylic rearrangement of the homoallylic substrate isopentenyl (IPP) to its allylic isomer, dimethylallyl diphosphate (DMAPP). The sequence is that of Isopentenyl-diphosphate delta-isomerase from Staphylococcus aureus (strain MSSA476).